Reading from the N-terminus, the 824-residue chain is AMP deaminase 2 (824 aa).

The interval 1–43 (MASYPGPGKSKAKYPFKKRAGLQASAAAPEARSGLGASPLQSA) is disordered. A compositionally biased stretch (basic residues) spans 10–20 (SKAKYPFKKRA). The residue at position 44 (R44) is an Omega-N-methylarginine. Phosphoserine is present on residues S45, S63, and S79. Y90 is subject to Phosphotyrosine. 2 positions are modified to phosphoserine: S96 and S113. Phosphothreonine is present on T133. A phosphoserine mark is found at S135 and S137. 2 residues coordinate Zn(2+): H364 and H366. Substrate-binding positions include H366 and 435–440 (KFNAKY). H633 serves as a coordination point for Zn(2+). E636 lines the substrate pocket. H655 (proton acceptor) is an active-site residue. D710 serves as a coordination point for Zn(2+). 711–714 (DPLQ) provides a ligand contact to substrate.

It belongs to the metallo-dependent hydrolases superfamily. Adenosine and AMP deaminases family. Homotetramer. It depends on Zn(2+) as a cofactor.

The enzyme catalyses AMP + H2O + H(+) = IMP + NH4(+). The protein operates within purine metabolism; IMP biosynthesis via salvage pathway; IMP from AMP: step 1/1. AMP deaminase plays a critical role in energy metabolism. Catalyzes the deamination of AMP to IMP and plays an important role in the purine nucleotide cycle. The polypeptide is AMP deaminase 2 (Mus musculus (Mouse)).